The primary structure comprises 468 residues: Alpha-N-acetylgalactosaminidase (468 aa).

Positions 1 to 30 form a signal peptide, tat-type signal; that stretch reads MENTRRNFLKKVTAAGIGAAGLAVTDQAMA. Residues 62-63, Asp-84, 133-136, 154-155, and Asn-183 each bind NAD(+); these read SR, WEWH, and EV. Tyr-212 contributes to the substrate binding site. 243 to 247 lines the NAD(+) pocket; sequence AEAQW. Substrate is bound by residues Arg-248, 260–263, and Tyr-342; that span reads YPTH. Tyr-260 lines the NAD(+) pocket.

This sequence belongs to the Gfo/Idh/MocA family. Glycosyl hydrolase 109 subfamily. The cofactor is NAD(+). In terms of processing, predicted to be exported by the Tat system. The position of the signal peptide cleavage has not been experimentally proven.

It catalyses the reaction Cleavage of non-reducing alpha-(1-&gt;3)-N-acetylgalactosamine residues from human blood group A and AB mucin glycoproteins, Forssman hapten and blood group A lacto series glycolipids.. Glycosidase that has specific alpha-N-acetylgalactosaminidase activity. This Tannerella forsythia (Bacteroides forsythus) protein is Alpha-N-acetylgalactosaminidase (nagA).